The chain runs to 81 residues: Photosystem I iron-sulfur center (81 aa).

2 4Fe-4S ferredoxin-type domains span residues 2–31 and 39–68; these read SHFVKIYDTCIGCTQCVRACPTDVLEMIPW and IASAPRTEDCVGCKRCESACPTDFLSVRVY. The [4Fe-4S] cluster site is built by Cys-11, Cys-14, Cys-17, Cys-21, Cys-48, Cys-51, Cys-54, and Cys-58.

As to quaternary structure, the eukaryotic PSI reaction center is composed of at least 11 subunits. [4Fe-4S] cluster is required as a cofactor.

It localises to the plastid thylakoid membrane. The catalysed reaction is reduced [plastocyanin] + hnu + oxidized [2Fe-2S]-[ferredoxin] = oxidized [plastocyanin] + reduced [2Fe-2S]-[ferredoxin]. Its function is as follows. Apoprotein for the two 4Fe-4S centers FA and FB of photosystem I (PSI); essential for photochemical activity. FB is the terminal electron acceptor of PSI, donating electrons to ferredoxin. The C-terminus interacts with PsaA/B/D and helps assemble the protein into the PSI complex. Required for binding of PsaD and PsaE to PSI. PSI is a plastocyanin-ferredoxin oxidoreductase, converting photonic excitation into a charge separation, which transfers an electron from the donor P700 chlorophyll pair to the spectroscopically characterized acceptors A0, A1, FX, FA and FB in turn. This Cuscuta exaltata (Tall dodder) protein is Photosystem I iron-sulfur center.